We begin with the raw amino-acid sequence, 659 residues long: uncharacterized protein (659 aa).

A signal peptide spans 1-25 (MVKRRLSAFGNAFLIYFIIFRLCCC). At 26–556 (SPQTSHWCKY…LYQESSFQKR (531 aa)) the chain is on the lumenal side. N94, N111, N128, and N142 each carry an N-linked (GlcNAc...) asparagine glycan. The SUN domain maps to 173-335 (AATIDSNIDE…SLLRVYGKTM (163 aa)). N-linked (GlcNAc...) asparagine glycosylation is found at N393 and N415. The tract at residues 417-445 (TGKSESYPATSTRSFNDISPSSSSSYSTA) is disordered. Residues 423 to 434 (YPATSTRSFNDI) show a composition bias toward polar residues. N-linked (GlcNAc...) asparagine glycans are attached at residues N495 and N504. A helical transmembrane segment spans residues 557 to 574 (LLMLQLTVLIVLTVYMAV). Residues 575–659 (SRLPENLPTT…IIHSRSHSVC (85 aa)) are Cytoplasmic-facing. Disordered stretches follow at residues 580-603 (NLPT…SRDE) and 632-659 (KRDP…HSVC). Polar residues predominate over residues 581 to 592 (LPTTRSSSNNPI). Residues 641 to 651 (SIHEREQDKII) show a composition bias toward basic and acidic residues.

This sequence belongs to the SLP1 family. As to quaternary structure, interacts with EMP65.

It is found in the endoplasmic reticulum membrane. In terms of biological role, may be involved in membrane protein folding. This is an uncharacterized protein from Schizosaccharomyces pombe (strain 972 / ATCC 24843) (Fission yeast).